A 357-amino-acid chain; its full sequence is DNA integrity scanning protein DisA (357 aa).

Residues 8-146 (VKSMINILQL…GNLRYTLKDI (139 aa)) form the DAC domain. ATP is bound by residues Gly75, Leu93, and 106–110 (MRHRT).

Belongs to the DisA family. In terms of assembly, homooctamer. Mg(2+) is required as a cofactor.

The catalysed reaction is 2 ATP = 3',3'-c-di-AMP + 2 diphosphate. Its function is as follows. Participates in a DNA-damage check-point that is active prior to asymmetric division when DNA is damaged. DisA forms globular foci that rapidly scan along the chromosomes during sporulation, searching for lesions. When a lesion is present, DisA pauses at the lesion site. This triggers a cellular response that culminates in a temporary block in sporulation initiation. In terms of biological role, also has diadenylate cyclase activity, catalyzing the condensation of 2 ATP molecules into cyclic di-AMP (c-di-AMP). c-di-AMP acts as a signaling molecule that couples DNA integrity with progression of sporulation. The rise in c-di-AMP level generated by DisA while scanning the chromosome, operates as a positive signal that advances sporulation; upon encountering a lesion, the DisA focus arrests at the damaged site and halts c-di-AMP synthesis. The chain is DNA integrity scanning protein DisA from Bacillus cereus (strain AH187).